The sequence spans 127 residues: Fluoride-specific ion channel FluC (127 aa).

4 consecutive transmembrane segments (helical) span residues 4–24 (LLLA…FLSM), 35–55 (LGTL…LAWF), 71–91 (TGFC…VFLL), and 103–123 (IAVN…LFSA). Gly-75 and Thr-78 together coordinate Na(+).

The protein belongs to the fluoride channel Fluc/FEX (TC 1.A.43) family.

The protein localises to the cell inner membrane. It carries out the reaction fluoride(in) = fluoride(out). Na(+) is not transported, but it plays an essential structural role and its presence is essential for fluoride channel function. Functionally, fluoride-specific ion channel. Important for reducing fluoride concentration in the cell, thus reducing its toxicity. This Enterobacter sp. (strain 638) protein is Fluoride-specific ion channel FluC.